The primary structure comprises 630 residues: Ribonucleoside-diphosphate reductase large subunit (630 aa).

Substrate contacts are provided by residues Ser67, Ala82–Cys83, Gly111, Asn317–Glu321, and Pro459–Ser463. A disulfide bridge connects residues Cys83 and Cys334. Residue Asn317 is the Proton acceptor of the active site. Cys319 acts as the Cysteine radical intermediate in catalysis. Glu321 (proton acceptor) is an active-site residue.

The protein belongs to the ribonucleoside diphosphate reductase large chain family. As to quaternary structure, heterotetramer composed of a homodimer of the large subunit (R1) and a homodimer of the small subunit (R2). Larger multisubunit protein complex are also active, composed of (R1)n(R2)n.

It catalyses the reaction a 2'-deoxyribonucleoside 5'-diphosphate + [thioredoxin]-disulfide + H2O = a ribonucleoside 5'-diphosphate + [thioredoxin]-dithiol. Under complex allosteric control mediated by deoxynucleoside triphosphates and ATP binding. The type of nucleotide bound at the specificity site determines substrate preference. It seems probable that ATP makes the enzyme reduce CDP and UDP, dGTP favors ADP reduction and dTTP favors GDP reduction. Functionally, ribonucleoside-diphosphate reductase holoenzyme provides the precursors necessary for viral DNA synthesis. Allows virus growth in non-dividing cells. Catalyzes the biosynthesis of deoxyribonucleotides from the corresponding ribonucleotides. The protein is Ribonucleoside-diphosphate reductase large subunit of Aedes vexans (Inland floodwater mosquito).